The sequence spans 298 residues: N-acetylmuramic acid 6-phosphate etherase 2 (298 aa).

An SIS domain is found at 51-214 (IVSRFEQGGR…STAAMVRLGR (164 aa)). Residue E79 is the Proton donor of the active site. Residue E110 is part of the active site.

The protein belongs to the GCKR-like family. MurNAc-6-P etherase subfamily. As to quaternary structure, homodimer.

The enzyme catalyses N-acetyl-D-muramate 6-phosphate + H2O = N-acetyl-D-glucosamine 6-phosphate + (R)-lactate. The protein operates within amino-sugar metabolism; N-acetylmuramate degradation. In terms of biological role, specifically catalyzes the cleavage of the D-lactyl ether substituent of MurNAc 6-phosphate, producing GlcNAc 6-phosphate and D-lactate. This Bacillus licheniformis (strain ATCC 14580 / DSM 13 / JCM 2505 / CCUG 7422 / NBRC 12200 / NCIMB 9375 / NCTC 10341 / NRRL NRS-1264 / Gibson 46) protein is N-acetylmuramic acid 6-phosphate etherase 2.